We begin with the raw amino-acid sequence, 62 residues long: Small ribosomal subunit protein eS27 (62 aa).

Zn(2+) is bound by residues Cys17, Cys20, Cys36, and Cys39. The C4-type zinc-finger motif lies at 17-39 (CPDCENEQIIFEKASTVVDCVVC).

Belongs to the eukaryotic ribosomal protein eS27 family. Part of the 30S ribosomal subunit. Zn(2+) is required as a cofactor.

In Methanosphaerula palustris (strain ATCC BAA-1556 / DSM 19958 / E1-9c), this protein is Small ribosomal subunit protein eS27.